A 76-amino-acid chain; its full sequence is MARFFRRRKFCRFTAEGVKEIDYKDLDTLKGYITETGKIVPSRITGTKARYQRQLATAIKRARYIAILPYTDSHFN.

This sequence belongs to the bacterial ribosomal protein bS18 family. In terms of assembly, part of the 30S ribosomal subunit. Forms a tight heterodimer with protein bS6.

Functionally, binds as a heterodimer with protein bS6 to the central domain of the 16S rRNA, where it helps stabilize the platform of the 30S subunit. The sequence is that of Small ribosomal subunit protein bS18 from Marinomonas sp. (strain MWYL1).